A 24-amino-acid polypeptide reads, in one-letter code: Large ribosomal subunit protein uL10 (24 aa).

It belongs to the universal ribosomal protein uL10 family. As to quaternary structure, part of the ribosomal stalk of the 50S ribosomal subunit. The N-terminus interacts with L11 and the large rRNA to form the base of the stalk. The C-terminus forms an elongated spine to which L12 dimers bind in a sequential fashion forming a multimeric L10(L12)X complex.

Functionally, forms part of the ribosomal stalk, playing a central role in the interaction of the ribosome with GTP-bound translation factors. The chain is Large ribosomal subunit protein uL10 (rplJ) from Enterobacter cloacae.